The primary structure comprises 278 residues: Putative transposase for insertion sequence element IS986/IS6110 (278 aa).

The Integrase catalytic domain occupies 101–268 (GPPAPNRLWV…VPPVELEAAY (168 aa)).

Involved in the transposition of the insertion sequence. The polypeptide is Putative transposase for insertion sequence element IS986/IS6110 (Mycobacterium bovis (strain ATCC BAA-935 / AF2122/97)).